Consider the following 524-residue polypeptide: Ribonuclease Y (524 aa).

Residues 3-23 (IVINLFLLVPASIVFFAAGFF) form a helical membrane-spanning segment. The segment at 96 to 127 (QQREGQLKKQAQDNRDMERRLQDQRKENEQVQ) is disordered. The span at 100–124 (GQLKKQAQDNRDMERRLQDQRKENE) shows a compositional bias: basic and acidic residues. In terms of domain architecture, KH spans 214–280 (ALSVVHIQTD…KLTLQKLLSE (67 aa)). The region spanning 340 to 432 (LLQHSREVAM…VDAANVISLS (93 aa)) is the HD domain.

This sequence belongs to the RNase Y family.

Its subcellular location is the cell membrane. In terms of biological role, endoribonuclease that initiates mRNA decay. The chain is Ribonuclease Y from Chlorobium phaeovibrioides (strain DSM 265 / 1930) (Prosthecochloris vibrioformis (strain DSM 265)).